The chain runs to 96 residues: Non-specific lipid-transfer protein 2 (96 aa).

An N-terminal signal peptide occupies residues 1–27 (MMRRLAVLVLAVAMVAACGGGVVGVAG). 4 disulfide bridges follow: cysteine 30–cysteine 62, cysteine 38–cysteine 52, cysteine 53–cysteine 88, and cysteine 64–cysteine 95.

Belongs to the plant LTP family. B11E subfamily.

Functionally, transfer lipids across membranes. May play a role in plant defense or in the biosynthesis of cuticle layers. The protein is Non-specific lipid-transfer protein 2 (LTP-2) of Oryza sativa subsp. indica (Rice).